The following is a 2473-amino-acid chain: Neurogenic locus notch homolog protein 2 (2473 aa).

Residues 1–25 form the signal peptide; that stretch reads MPALRPAALRALLWLWLCGAGPAHA. 4 EGF-like domains span residues 26–63, 64–102, 105–143, and 144–180; these read LQCR…EYCQ, HRDP…EDCQ, TSHP…KQCQ, and WTDA…QKCE. Residues 26-1679 are Extracellular-facing; that stretch reads LQCRGGQEPC…SELESPRNAQ (1654 aa). Intrachain disulfides connect Cys-28–Cys-41, Cys-35–Cys-51, Cys-53–Cys-62, Cys-68–Cys-79, Cys-73–Cys-90, Cys-92–Cys-101, Cys-109–Cys-121, Cys-115–Cys-131, Cys-133–Cys-142, Cys-148–Cys-159, Cys-153–Cys-168, Cys-170–Cys-179, Cys-186–Cys-198, Cys-192–Cys-207, Cys-209–Cys-218, Cys-230–Cys-246, Cys-248–Cys-257, Cys-264–Cys-275, Cys-269–Cys-284, Cys-286–Cys-295, Cys-302–Cys-315, Cys-309–Cys-324, Cys-326–Cys-335, Cys-342–Cys-353, Cys-347–Cys-362, Cys-364–Cys-373, Cys-379–Cys-390, Cys-384–Cys-401, Cys-403–Cys-412, Cys-419–Cys-433, Cys-427–Cys-442, Cys-444–Cys-453, Cys-460–Cys-471, Cys-465–Cys-480, Cys-482–Cys-491, Cys-498–Cys-509, Cys-503–Cys-518, Cys-520–Cys-529, Cys-536–Cys-547, Cys-541–Cys-556, Cys-558–Cys-567, Cys-574–Cys-584, Cys-579–Cys-593, Cys-595–Cys-604, Cys-611–Cys-622, Cys-616–Cys-631, Cys-633–Cys-642, Cys-649–Cys-659, Cys-654–Cys-668, Cys-670–Cys-679, Cys-686–Cys-697, Cys-691–Cys-706, Cys-708–Cys-717, Cys-724–Cys-734, Cys-729–Cys-743, Cys-745–Cys-754, Cys-761–Cys-772, Cys-766–Cys-781, Cys-783–Cys-792, Cys-799–Cys-810, Cys-804–Cys-819, Cys-821–Cys-830, Cys-837–Cys-848, Cys-842–Cys-859, Cys-861–Cys-870, Cys-877–Cys-888, Cys-882–Cys-897, Cys-899–Cys-908, Cys-915–Cys-926, Cys-920–Cys-935, Cys-937–Cys-946, Cys-953–Cys-964, Cys-958–Cys-973, Cys-975–Cys-984, Cys-991–Cys-1002, Cys-996–Cys-1011, Cys-1013–Cys-1022, Cys-1029–Cys-1040, Cys-1034–Cys-1049, Cys-1051–Cys-1060, Cys-1067–Cys-1078, Cys-1072–Cys-1087, and Cys-1089–Cys-1098. Asn-46 carries N-linked (GlcNAc...) asparagine glycosylation. A glycan (N-linked (GlcNAc...) asparagine) is linked at Asn-155. The region spanning 182-219 is the EGF-like 5; calcium-binding domain; that stretch reads DINECDIPGRCQHGGTCLNLPGSYRCQCPQGFTGQHCD. Positions 221–258 constitute an EGF-like 6; incomplete domain; that stretch reads PYVPCAPSPCVNGGTCRQTGDFTFECNCLPGFEGSTCE. Positions 260-296 constitute an EGF-like 7; calcium-binding domain; the sequence is NIDDCPNHKCQNGGVCVDGVNTYNCRCPPQWTGQFCT. The 39-residue stretch at 298–336 folds into the EGF-like 8; calcium-binding domain; sequence DVDECLLQPNACQNGGTCTNRNGGYGCVCVNGWSGDDCS. Residues 338–374 form the EGF-like 9; calcium-binding domain; sequence NIDDCAYASCTPGSTCIDRVASFSCLCPEGKAGLLCH. The region spanning 375 to 413 is the EGF-like 10 domain; sequence LDDACISNPCHKGALCDTNPLNGQYICTCPQGYKGADCT. An EGF-like 11; calcium-binding domain is found at 415-454; that stretch reads DVDECAMANSNPCEHAGKCVNTDGAFHCECLKGYAGPRCE. One can recognise an EGF-like 12; calcium-binding domain in the interval 456–492; sequence DINECHSDPCQNDATCLDKIGGFTCLCMPGFKGVHCE. In terms of domain architecture, EGF-like 13; calcium-binding spans 494 to 530; it reads EVNECQSNPCVNNGQCVDKVNRFQCLCPPGFTGPVCQ. An EGF-like 14; calcium-binding domain is found at 532-568; it reads DIDDCSSTPCLNGAKCIDHPNGYECQCATGFTGILCD. Residues 570–605 enclose the EGF-like 15; calcium-binding domain; the sequence is NIDNCDPDPCHHGQCQDGIDSYTCICNPGYMGAICS. One can recognise an EGF-like 16; calcium-binding domain in the interval 607–643; that stretch reads QIDECYSSPCLNDGRCIDLVNGYQCNCQPGTSGLNCE. An O-linked (Glc...) serine; alternate glycan is attached at Ser-613. Residue Ser-613 is glycosylated (O-linked (Xyl...) serine; alternate). In terms of domain architecture, EGF-like 17; calcium-binding spans 645 to 680; sequence NFDDCASNPCMHGVCVDGINRYSCVCSPGFTGQRCN. The 37-residue stretch at 682 to 718 folds into the EGF-like 18; calcium-binding domain; sequence DIDECASNPCRKGATCINDVNGFRCICPEGPHHPSCY. One can recognise an EGF-like 19 domain in the interval 720-755; sequence QVNECLSNPCIHGNCTGGLSGYKCLCDAGWVGVNCE. Residue Asn-733 is glycosylated (N-linked (GlcNAc...) asparagine). The region spanning 757-793 is the EGF-like 20; calcium-binding domain; that stretch reads DKNECLSNPCQNGGTCNNLVNGYRCTCKKGFKGYNCQ. The 37-residue stretch at 795–831 folds into the EGF-like 21; calcium-binding domain; that stretch reads NIDECASNPCLNQGTCFDDVSGYTCHCMLPYTGKNCQ. An EGF-like 22 domain is found at 833–871; sequence VLAPCSPNPCENAAVCKEAPNFESFSCLCAPGWQGKRCT. The region spanning 873-909 is the EGF-like 23; calcium-binding domain; the sequence is DVDECISKPCMNNGVCHNTQGSYVCECPPGFSGMDCE. The region spanning 911–947 is the EGF-like 24; calcium-binding domain; it reads DINDCLANPCQNGGSCVDHVNTFSCQCHPGFIGDKCQ. The 37-residue stretch at 949–985 folds into the EGF-like 25; calcium-binding domain; it reads DMNECLSEPCKNGGTCSDYVNSYTCTCPAGFHGVHCE. The EGF-like 26; calcium-binding domain maps to 987-1023; it reads NIDECTESSCFNGGTCVDGINSFSCLCPVGFTGPFCL. The EGF-like 27; calcium-binding domain maps to 1025–1061; the sequence is DINECSSNPCLNAGTCVDGLGTYRCICPLGYTGKNCQ. 2 consecutive EGF-like domains span residues 1063–1099 and 1101–1147; these read LVNL…AYCD and LNVS…SYCE. An N-linked (GlcNAc...) asparagine glycan is attached at Asn-1102. 24 cysteine pairs are disulfide-bonded: Cys-1105/Cys-1126, Cys-1120/Cys-1135, Cys-1137/Cys-1146, Cys-1153/Cys-1164, Cys-1158/Cys-1173, Cys-1175/Cys-1184, Cys-1191/Cys-1202, Cys-1196/Cys-1211, Cys-1213/Cys-1222, Cys-1229/Cys-1241, Cys-1235/Cys-1250, Cys-1252/Cys-1261, Cys-1268/Cys-1281, Cys-1273/Cys-1290, Cys-1292/Cys-1301, Cys-1308/Cys-1319, Cys-1313/Cys-1331, Cys-1333/Cys-1346, Cys-1378/Cys-1389, Cys-1383/Cys-1400, Cys-1402/Cys-1411, Cys-1425/Cys-1448, Cys-1430/Cys-1443, and Cys-1439/Cys-1455. An EGF-like 30; calcium-binding domain is found at 1149–1185; that stretch reads QLDECASNPCQHGATCNDFIGGYRCECVPGYQGVNCE. Positions 1187-1223 constitute an EGF-like 31; calcium-binding domain; that stretch reads EVDECQNQPCQNGGTCIDLVNHFKCSCPPGTRGLLCE. Residues 1225–1262 enclose the EGF-like 32; calcium-binding domain; the sequence is NIDECAGGPHCLNGGQCVDRIGGYTCRCLPGFAGERCE. 3 consecutive EGF-like domains span residues 1264–1302, 1304–1343, and 1375–1412; these read DINE…RHCE, FLDV…ARCQ, and ESGC…SHCE. LNR repeat units lie at residues 1425–1465, 1466–1502, and 1503–1544; these read CQSQ…PWAN, CTST…NSKT, and CKYD…NLAE. The interval 1425–1679 is negative regulatory region (NRR); it reads CQSQYCADKA…SELESPRNAQ (255 aa). The N-linked (GlcNAc...) asparagine glycan is linked to Asn-1465. 7 cysteine pairs are disulfide-bonded: Cys-1466–Cys-1489, Cys-1472–Cys-1484, Cys-1480–Cys-1496, Cys-1503–Cys-1527, Cys-1509–Cys-1522, Cys-1518–Cys-1534, and Cys-1634–Cys-1641. A helical membrane pass occupies residues 1680-1700; that stretch reads LLYLLAVAVVIILFFILLGVI. Residues 1701–2473 lie on the Cytoplasmic side of the membrane; the sequence is MAKRKRKHGF…PPHSNMQVYA (773 aa). A Phosphothreonine modification is found at Thr-1718. Residues 1755 to 1778 form a disordered region; that stretch reads GTSEHWVDDEGPQPKKAKAEDEAL. Position 1780 is a phosphoserine (Ser-1780). Thr-1803 is subject to Phosphothreonine. The residue at position 1805 (Ser-1805) is a Phosphoserine. At Thr-1809 the chain carries Phosphothreonine. 6 ANK repeats span residues 1828-1872, 1877-1906, 1910-1940, 1944-1973, 1977-2006, and 2010-2039; these read DGCT…SLQA, TGEM…DANA, MGRC…DLDA, DGTT…DVNA, HGKS…NRDM, and KEET…NRDI. 2 positions are modified to phosphoserine: Ser-1843 and Ser-1846. Phosphoserine occurs at positions 2071, 2079, and 2082. At Thr-2098 the chain carries Phosphothreonine. 3 disordered regions span residues 2098–2117, 2122–2169, and 2382–2473; these read TPMG…PTSL, KEAK…TSSP, and VGKY…QVYA. The span at 2099-2108 shows a compositional bias: basic residues; it reads PMGKKARRPN. 2 stretches are compositionally biased toward polar residues: residues 2140-2151 and 2390-2400; these read VQLSESSVTLSP and SQHSYASSNAA. Residues 2419 to 2446 are compositionally biased toward low complexity; the sequence is PSPESPDQWSSSSPHSASDWSDVTTSPT. The segment covering 2447–2456 has biased composition (gly residues); the sequence is PGGGGGGQRG.

This sequence belongs to the NOTCH family. As to quaternary structure, heterodimer of a C-terminal fragment N(TM) and an N-terminal fragment N(EC) which are probably linked by disulfide bonds. Interacts with MAML1, MAML2 and MAML3 which act as transcriptional coactivators for NOTCH2. Interacts with RELA/p65. Interacts with HIF1AN. Interacts (via ANK repeats) with TCIM, the interaction inhibits the nuclear translocation of NOTCH2 N2ICD. Interacts with CUL1, RBX1, SKP1 and FBXW7 that are SCF(FBXW7) E3 ubiquitin-protein ligase complex components. Interacts with MINAR1; this interaction increases MINAR1 stability and function. Interacts with MDK; this interaction mediates a nuclear accumulation of NOTCH2 and therefore activation of NOTCH2 signaling leading to interaction between HES1 and STAT3. Interacts with MINAR2. Post-translationally, synthesized in the endoplasmic reticulum as an inactive form which is proteolytically cleaved by a furin-like convertase in the trans-Golgi network before it reaches the plasma membrane to yield an active, ligand-accessible form. Cleavage results in a C-terminal fragment N(TM) and a N-terminal fragment N(EC). Following ligand binding, it is cleaved by TNF-alpha converting enzyme (TACE) to yield a membrane-associated intermediate fragment called notch extracellular truncation (NEXT). This fragment is then cleaved by presenilin dependent gamma-secretase to release a notch-derived peptide containing the intracellular domain (NICD) from the membrane. Hydroxylated by HIF1AN. In terms of processing, can be either O-glucosylated or O-xylosylated at Ser-613 by POGLUT1. Post-translationally, phosphorylated by GSK3. GSK3-mediated phosphorylation is necessary for NOTCH2 recognition by FBXW7, ubiquitination and degradation via the ubiquitin proteasome pathway. In terms of tissue distribution, expressed in the brain, liver, kidney, neuroepithelia, somites, optic vesicles and branchial arches, but not heart.

Its subcellular location is the cell membrane. It localises to the nucleus. The protein localises to the cytoplasm. Functionally, functions as a receptor for membrane-bound ligands Jagged-1 (JAG1), Jagged-2 (JAG2) and Delta-1 (DLL1) to regulate cell-fate determination. Upon ligand activation through the released notch intracellular domain (NICD) it forms a transcriptional activator complex with RBPJ/RBPSUH and activates genes of the enhancer of split locus. Affects the implementation of differentiation, proliferation and apoptotic programs. May play an essential role in postimplantation development, probably in some aspect of cell specification and/or differentiation. In collaboration with RELA/p65 enhances NFATc1 promoter activity and positively regulates RANKL-induced osteoclast differentiation. Positively regulates self-renewal of liver cancer cells. This Mus musculus (Mouse) protein is Neurogenic locus notch homolog protein 2.